A 347-amino-acid chain; its full sequence is Protein-arginine kinase (347 aa).

In terms of domain architecture, Phosphagen kinase C-terminal spans 22 to 247 (LVVSTRIRLA…EQVIQAERHA (226 aa)). ATP-binding positions include 25-29 (STRIR), histidine 85, arginine 118, 169-173 (RASVM), and 200-205 (RGRYGE). The RDXXRA motif of the pArg binding pocket involved in allosteric regulation motif lies at 330–335 (RDRERA).

It belongs to the ATP:guanido phosphotransferase family.

It carries out the reaction L-arginyl-[protein] + ATP = N(omega)-phospho-L-arginyl-[protein] + ADP + H(+). With respect to regulation, appears to be allosterically activated by the binding of pArg-containing polypeptides to the pArg-binding pocket localized in the C-terminal domain of McsB. In terms of biological role, catalyzes the specific phosphorylation of arginine residues in proteins. The protein is Protein-arginine kinase of Exiguobacterium sp. (strain ATCC BAA-1283 / AT1b).